We begin with the raw amino-acid sequence, 1110 residues long: Serine/threonine-protein kinase PknK (1110 aa).

The Protein kinase domain maps to 26–283 (FDNVEEIGRG…TAADVGEELR (258 aa)). ATP contacts are provided by residues 32-40 (IGRGGFGVV) and K55. The Proton acceptor role is filled by R148. Mg(2+) contacts are provided by N154 and D167. Positions 308-343 (RSPEAHAAHRHTGGGTPTVPTPPTPATKYRPSVPTG) are disordered.

Belongs to the protein kinase superfamily. Ser/Thr protein kinase family.

It catalyses the reaction L-seryl-[protein] + ATP = O-phospho-L-seryl-[protein] + ADP + H(+). It carries out the reaction L-threonyl-[protein] + ATP = O-phospho-L-threonyl-[protein] + ADP + H(+). The sequence is that of Serine/threonine-protein kinase PknK (pknK) from Mycobacterium bovis (strain ATCC BAA-935 / AF2122/97).